The chain runs to 332 residues: Beta-ketoacyl-[acyl-carrier-protein] synthase III (332 aa).

Catalysis depends on residues Cys-114 and His-255. The interval Gln-256 to Arg-260 is ACP-binding. Asn-285 is a catalytic residue.

Belongs to the thiolase-like superfamily. FabH family. As to quaternary structure, homodimer.

The protein localises to the cytoplasm. The enzyme catalyses malonyl-[ACP] + acetyl-CoA + H(+) = 3-oxobutanoyl-[ACP] + CO2 + CoA. Its pathway is lipid metabolism; fatty acid biosynthesis. Its function is as follows. Catalyzes the condensation reaction of fatty acid synthesis by the addition to an acyl acceptor of two carbons from malonyl-ACP. Catalyzes the first condensation reaction which initiates fatty acid synthesis and may therefore play a role in governing the total rate of fatty acid production. Possesses both acetoacetyl-ACP synthase and acetyl transacylase activities. Its substrate specificity determines the biosynthesis of branched-chain and/or straight-chain of fatty acids. The protein is Beta-ketoacyl-[acyl-carrier-protein] synthase III of Sulfurimonas denitrificans (strain ATCC 33889 / DSM 1251) (Thiomicrospira denitrificans (strain ATCC 33889 / DSM 1251)).